Here is a 126-residue protein sequence, read N- to C-terminus: uncharacterized protein (126 aa).

In terms of domain architecture, HTH hxlR-type spans 20–118; sequence CPSREVLKHV…WIELNLPEVL (99 aa).

This is an uncharacterized protein from Escherichia coli (strain K12).